The chain runs to 98 residues: U11-barytoxin-Tl1b (98 aa).

The signal sequence occupies residues 1-21 (MKTLVLVAVLGLASLYLLSYA). The propeptide occupies 22–50 (SEVQQLSRDEEEFRALVASFGGLFDTEER). Intrachain disulfides connect C57-C71, C64-C76, and C70-C89.

It belongs to the neurotoxin 10 (Hwtx-1) family. 25 (ICK4) subfamily. As to expression, expressed by the venom gland.

The protein localises to the secreted. In terms of biological role, ion channel inhibitor. This is U11-barytoxin-Tl1b from Trittame loki (Brush-footed trapdoor spider).